A 244-amino-acid chain; its full sequence is 7-cyano-7-deazaguanine synthase (244 aa).

17 to 27 (FSGGQDSTTCL) serves as a coordination point for ATP. Residues Cys205, Cys220, Cys223, and Cys226 each contribute to the Zn(2+) site.

It belongs to the QueC family. Requires Zn(2+) as cofactor.

The enzyme catalyses 7-carboxy-7-deazaguanine + NH4(+) + ATP = 7-cyano-7-deazaguanine + ADP + phosphate + H2O + H(+). The protein operates within purine metabolism; 7-cyano-7-deazaguanine biosynthesis. Catalyzes the ATP-dependent conversion of 7-carboxy-7-deazaguanine (CDG) to 7-cyano-7-deazaguanine (preQ(0)). The protein is 7-cyano-7-deazaguanine synthase of Bordetella parapertussis (strain 12822 / ATCC BAA-587 / NCTC 13253).